Consider the following 102-residue polypeptide: Large ribosomal subunit protein bL21 (102 aa).

It belongs to the bacterial ribosomal protein bL21 family. Part of the 50S ribosomal subunit. Contacts protein L20.

Its function is as follows. This protein binds to 23S rRNA in the presence of protein L20. The sequence is that of Large ribosomal subunit protein bL21 from Nitratidesulfovibrio vulgaris (strain ATCC 29579 / DSM 644 / CCUG 34227 / NCIMB 8303 / VKM B-1760 / Hildenborough) (Desulfovibrio vulgaris).